Reading from the N-terminus, the 218-residue chain is Adenylate kinase (218 aa).

Residue 10–15 (GAGKGT) participates in ATP binding. The tract at residues 30 to 59 (STGDMLRAAVKAGTPLGLEAKKVMDAGGLV) is NMP. AMP-binding positions include T31, R36, 57–59 (GLV), 85–88 (GFPR), and Q92. The LID stretch occupies residues 122–159 (GRRVHPASGRVYHTKYNPPKVEGKDDETGDELVQRDDD). ATP is bound by residues R123 and 132–133 (VY). The disordered stretch occupies residues 139 to 160 (PPKVEGKDDETGDELVQRDDDQ). 2 residues coordinate AMP: R156 and R167. G203 is a binding site for ATP.

The protein belongs to the adenylate kinase family. As to quaternary structure, monomer.

The protein resides in the cytoplasm. The catalysed reaction is AMP + ATP = 2 ADP. It participates in purine metabolism; AMP biosynthesis via salvage pathway; AMP from ADP: step 1/1. Catalyzes the reversible transfer of the terminal phosphate group between ATP and AMP. Plays an important role in cellular energy homeostasis and in adenine nucleotide metabolism. This is Adenylate kinase from Alcanivorax borkumensis (strain ATCC 700651 / DSM 11573 / NCIMB 13689 / SK2).